The following is a 95-amino-acid chain: Co-chaperonin GroES (95 aa).

It belongs to the GroES chaperonin family. In terms of assembly, heptamer of 7 subunits arranged in a ring. Interacts with the chaperonin GroEL.

Its subcellular location is the cytoplasm. Functionally, together with the chaperonin GroEL, plays an essential role in assisting protein folding. The GroEL-GroES system forms a nano-cage that allows encapsulation of the non-native substrate proteins and provides a physical environment optimized to promote and accelerate protein folding. GroES binds to the apical surface of the GroEL ring, thereby capping the opening of the GroEL channel. The sequence is that of Co-chaperonin GroES from Chlorobium phaeobacteroides (strain DSM 266 / SMG 266 / 2430).